Here is a 1171-residue protein sequence, read N- to C-terminus: ATP-dependent helicase/deoxyribonuclease subunit B (1171 aa).

It belongs to the helicase family. AddB/RexB type 2 subfamily. Heterodimer of AddA and RexB. It depends on Mg(2+) as a cofactor.

The heterodimer acts as both an ATP-dependent DNA helicase and an ATP-dependent, dual-direction single-stranded exonuclease. Recognizes the chi site generating a DNA molecule suitable for the initiation of homologous recombination. This subunit has 5' -&gt; 3' nuclease activity but not helicase activity. The protein is ATP-dependent helicase/deoxyribonuclease subunit B of Leuconostoc citreum (strain KM20).